The following is a 20-amino-acid chain: Thylakoid lumenal 22 kDa protein (20 aa).

It localises to the plastid. The protein localises to the chloroplast thylakoid lumen. In Spinacia oleracea (Spinach), this protein is Thylakoid lumenal 22 kDa protein.